The chain runs to 441 residues: CBL-interacting serine/threonine-protein kinase 6 (441 aa).

In terms of domain architecture, Protein kinase spans 24 to 278 (YELGRLLGHG…IEKVMDSPWF (255 aa)). Residues 30–38 (LGHGTFAKV) and K53 each bind ATP. D146 (proton acceptor) is an active-site residue. The interval 164–193 (DFGLSAFTEHLKQDGLLHTTCGTPAYVAPE) is activation loop. S168 is subject to Phosphoserine. T182 carries the phosphothreonine modification. The NAF domain occupies 310–334 (EETETLNAFHIIALSEGFDLSPLFE). Positions 341–371 (KREMRFATSRPASSVISSLEEAARVGNKFDV) are PPI.

The protein belongs to the protein kinase superfamily. CAMK Ser/Thr protein kinase family. SNF1 subfamily. In terms of assembly, part of a K(+)-channel calcium-sensing kinase/phosphatase complex composed by a calcium sensor CBL (CBL1, CBL2, CBL3 or CBL9), a kinase CIPK (CIPK6, CIPK16 or CIPK23), a phosphatase PP2C (AIP1) and a K(+)-channel (AKT1). Interacts with AKT1, AKT2,CBL1, CBL2, CBL3, CBL4/SOS3 and CBL9. It depends on Mn(2+) as a cofactor. Post-translationally, autophosphorylated. In terms of tissue distribution, expressed in roots and shoots.

The protein localises to the endoplasmic reticulum. The enzyme catalyses L-seryl-[protein] + ATP = O-phospho-L-seryl-[protein] + ADP + H(+). It carries out the reaction L-threonyl-[protein] + ATP = O-phospho-L-threonyl-[protein] + ADP + H(+). Functionally, CIPK serine-threonine protein kinases interact with CBL proteins. Binding of a CBL protein to the regulatory NAF domain of CIPK protein lead to the activation of the kinase in a calcium-dependent manner. Downstream of CBL1, CBL2, CBL3 and CBL9, regulates by phosphorylation the K(+) conductance and uptake of AKT1. Binds to CBL4 to modulate AKT2 activity by promoting a kinase interaction-dependent but phosphorylation-independent translocation of the channel to the plasma membrane. The protein is CBL-interacting serine/threonine-protein kinase 6 (CIPK6) of Arabidopsis thaliana (Mouse-ear cress).